The chain runs to 140 residues: Trafficking protein particle complex subunit 2-like protein (140 aa).

The protein belongs to the TRAPP small subunits family. Sedlin subfamily.

The chain is Trafficking protein particle complex subunit 2-like protein (trappc2l) from Dictyostelium discoideum (Social amoeba).